We begin with the raw amino-acid sequence, 434 residues long: Histidinol dehydrogenase (434 aa).

Tyrosine 130, glutamine 191, and asparagine 214 together coordinate NAD(+). Residues serine 237, glutamine 259, and histidine 262 each coordinate substrate. 2 residues coordinate Zn(2+): glutamine 259 and histidine 262. Active-site proton acceptor residues include glutamate 327 and histidine 328. Residues histidine 328, aspartate 361, glutamate 415, and histidine 420 each contribute to the substrate site. Position 361 (aspartate 361) interacts with Zn(2+). Residue histidine 420 participates in Zn(2+) binding.

Belongs to the histidinol dehydrogenase family. Zn(2+) serves as cofactor.

It catalyses the reaction L-histidinol + 2 NAD(+) + H2O = L-histidine + 2 NADH + 3 H(+). It participates in amino-acid biosynthesis; L-histidine biosynthesis; L-histidine from 5-phospho-alpha-D-ribose 1-diphosphate: step 9/9. Its function is as follows. Catalyzes the sequential NAD-dependent oxidations of L-histidinol to L-histidinaldehyde and then to L-histidine. The polypeptide is Histidinol dehydrogenase (Cereibacter sphaeroides (strain ATCC 17023 / DSM 158 / JCM 6121 / CCUG 31486 / LMG 2827 / NBRC 12203 / NCIMB 8253 / ATH 2.4.1.) (Rhodobacter sphaeroides)).